The following is a 1497-amino-acid chain: DNA-directed RNA polymerase subunit beta' (1497 aa).

4 residues coordinate Zn(2+): cysteine 67, cysteine 69, cysteine 82, and cysteine 85. Mg(2+) is bound by residues aspartate 499, aspartate 501, and aspartate 503. The Zn(2+) site is built by cysteine 867, cysteine 943, cysteine 950, and cysteine 953. Residues 1476 to 1497 (ESNATERVVEEPATREGFANER) are disordered. A compositionally biased stretch (basic and acidic residues) spans 1482–1497 (RVVEEPATREGFANER).

It belongs to the RNA polymerase beta' chain family. As to quaternary structure, the RNAP catalytic core consists of 2 alpha, 1 beta, 1 beta' and 1 omega subunit. When a sigma factor is associated with the core the holoenzyme is formed, which can initiate transcription. It depends on Mg(2+) as a cofactor. Zn(2+) serves as cofactor.

The enzyme catalyses RNA(n) + a ribonucleoside 5'-triphosphate = RNA(n+1) + diphosphate. In terms of biological role, DNA-dependent RNA polymerase catalyzes the transcription of DNA into RNA using the four ribonucleoside triphosphates as substrates. The polypeptide is DNA-directed RNA polymerase subunit beta' (Pelodictyon phaeoclathratiforme (strain DSM 5477 / BU-1)).